The primary structure comprises 142 residues: Pro-opiomelanocortin (142 aa).

Residues Ser-1–Gly-8 constitute a propeptide that is removed on maturation. Val-23 is subject to Valine amide. Ser-41 carries the phosphoserine modification.

The protein belongs to the POMC family. Post-translationally, specific enzymatic cleavages at paired basic residues yield the different active peptides. ACTH and MSH are produced by the pituitary gland.

The protein localises to the secreted. Stimulates the adrenal glands to release cortisol. Functionally, anorexigenic peptide. Increases the pigmentation of skin by increasing melanin production in melanocytes. Its function is as follows. Increases the pigmentation of skin by increasing melanin production in melanocytes. In terms of biological role, endogenous orexigenic opiate. Endogenous opiate. The polypeptide is Pro-opiomelanocortin (POMC) (Neovison vison (American mink)).